Reading from the N-terminus, the 2181-residue chain is Genome polyprotein (2181 aa).

Gly-80 carries the N-myristoyl glycine; by host lipid modification. Interaction with host receptor ANTXR1 stretches follow at residues 316 to 337 and 761 to 772; these read DYRT…PPNW and RFGLYANPSGSG. Residues 1165–1333 enclose the SF3 helicase domain; the sequence is LGKTNLAQSL…YKKHTRLNFD (169 aa). Residue 1197–1204 participates in ATP binding; it reads GKPGCGKS. The disordered stretch occupies residues 1472–1500; that stretch reads EETESEGSVKAPRSENAYDGPKKNSKPPG. An O-(5'-phospho-RNA)-tyrosine modification is found at Tyr-1489. The Peptidase C3 domain maps to 1511-1704; sequence NVDMGFEAAV…AGTYISKLGL (194 aa). His-1556 serves as the catalytic For protease 3C activity and deubiquitinase activity. The For protease 3C activity role is filled by Asp-1592. The For protease 3C activity and deubiquitinase activity role is filled by Cys-1668. Residues 1950–2068 form the RdRp catalytic domain; that stretch reads KNTYDVDYSA…GTDYDLDFNE (119 aa). Residues Asp-1956 and Asp-2054 each act as for RdRp activity in the active site.

In terms of assembly, interacts with host entry receptor ANTRX1. Interacts with host IRF3; this interaction is involved in the suppression of IRF3 and IRF7 expression and phosphorylation by the virus. Interacts with host IRF7; this interaction is involved in the suppression of IRF3 and IRF7 expression and phosphorylation by the virus. Interacts with host MAVS; this interaction allows the cleavage of MAVS and subsequent suppression of host immunity. Interacts with host TRIF; this interaction allows the cleavage of TRIF and subsequent suppression of host immunity. Interacts with host TANK; this interaction allows the cleavage of TANK and subsequent suppression of host immunity. Interacts with host RIGI. Interacts with host TBK1. Interacts with host TRAF3. In terms of processing, specific enzymatic cleavages by the viral protease in vivo yield a variety of precursors and mature proteins. The polyprotein seems to be cotranslationally cleaved at the 2A/2B junction by a ribosomal skip from one codon to the next without formation of a peptide bond. This process would release the P1-2A peptide from the translational complex. During virion maturation, immature virions are rendered infectious following cleavage of VP0 into VP4 and VP2. This maturation seems to be an autocatalytic event triggered by the presence of RNA in the capsid and is followed by a conformational change of the particle. Post-translationally, myristoylation is required during RNA encapsidation and formation of the mature virus particle. In terms of processing, uridylylated by the polymerase and is covalently linked to the 5'-end of genomic RNA. This uridylylated form acts as a nucleotide-peptide primer for the polymerase.

The protein resides in the virion. It localises to the host cytoplasm. Its subcellular location is the host nucleus. The protein localises to the host nucleolus. It is found in the host cytoplasmic vesicle membrane. The catalysed reaction is RNA(n) + a ribonucleoside 5'-triphosphate = RNA(n+1) + diphosphate. The enzyme catalyses Selective cleavage of Gln-|-Gly bond in the poliovirus polyprotein. In other picornavirus reactions Glu may be substituted for Gln, and Ser or Thr for Gly.. It carries out the reaction Thiol-dependent hydrolysis of ester, thioester, amide, peptide and isopeptide bonds formed by the C-terminal Gly of ubiquitin (a 76-residue protein attached to proteins as an intracellular targeting signal).. It catalyses the reaction ATP + H2O = ADP + phosphate + H(+). Its function is as follows. Forms an icosahedral capsid of pseudo T=3 symmetry with capsid proteins VP2 and VP3. Together they form an icosahedral capsid composed of 60 copies of each VP1, VP2, and VP3, with a diameter of approximately 325 Angstroms. VP4 lies on the inner surface of the protein shell formed by VP1, VP2 and VP3. All the three latter proteins contain a beta-sheet structure called beta-barrel jelly roll. VP1 is situated at the 12 fivefold axes, whereas VP2 and VP3 are located at the quasi-sixfold axes. Binds the host receptor ANTXR1 for attachment and uncoating (entry). In terms of biological role, forms an icosahedral capsid of pseudo T=3 symmetry with capsid proteins VP2 and VP3. Together they form an icosahedral capsid composed of 60 copies of each VP1, VP2, and VP3, with a diameter of approximately 270 Angstroms. VP4 lies on the inner surface of the protein shell formed by VP1, VP2 and VP3. All the three latter proteins contain a beta-sheet structure called beta-barrel jelly roll. VP1 is situated at the 12 fivefold axes, whereas VP2 and VP3 are located at the quasi-sixfold axes. Binds the host receptor ANTXR1 for attachment and uncoating (entry). Functionally, forms an icosahedral capsid of pseudo T=3 symmetry with capsid proteins VP2 and VP3. Together they form an icosahedral capsid composed of 60 copies of each VP1, VP2, and VP3, with a diameter of approximately 270 Angstroms. VP4 lies on the inner surface of the protein shell formed by VP1, VP2 and VP3. All the three latter proteins contain a beta-sheet structure called beta-barrel jelly roll. VP1 is situated at the 12 fivefold axes, whereas VP2 and VP3 are located at the quasi-sixfold axes. Vp3 also seems to be involved in the binding to host receptor ANTXR1 for attachment and uncoating (entry). Lies on the inner surface of the capsid shell. After binding to the host receptor, the capsid undergoes conformational changes. Capsid protein VP4 is released, capsid protein VP1 N-terminus is externalized, and together, they shape a pore in the host membrane through which the viral genome is translocated into the host cell cytoplasm. After genome has been released, the channel shrinks. Its function is as follows. VP0 precursor is a component of immature procapsids. In terms of biological role, mediates self-processing of the polyprotein by a translational effect termed 'ribosome skipping'. Mechanistically, 2A-mediated cleavage occurs between the C-terminal glycine and the proline of the downstream protein 2B. Functionally, plays an essential role in the virus replication cycle by acting as a viroporin. Creates a pore in the host endoplasmic reticulum and as a consequence releases Ca2+ in the cytoplasm of infected cell. In turn, high levels of cytoplasmic calcium may trigger membrane trafficking and transport of viral ER-associated proteins to viroplasms, sites of viral genome replication. Associates with and induces structural rearrangements of intracellular membranes. Its function is as follows. Covalently linked to the 5'-end of both the positive-strand and negative-strand genomic RNAs. Acts as a genome-linked replication primer. In terms of biological role, cysteine protease that generates mature viral proteins from the precursor polyprotein. Inactivates crucial host adapter molecules in order to suppress antiviral type-I interferon (type-I IFN) and NF-kappaB production to escape host antiviral innate immune responses. Deubiquitinase that acts on both lysine-48- and lysine-63-linked polyubiquitin chains and inhibits the ubiquitination of the ATP-dependent RNA helicase RIGI, TANK-binding kinase 1 (TBK1), and TNF receptor-associated factor 3 (TRAF3), thereby blocking the expression of IFN-beta and IFN stimulated gene 54 (ISG54). Induces host IRF3 and IRF7 degradation thereby suppressing IRF3- and IRF7-induced type-I IFN production. Also decreases host IRF3 phosphorylation leading to negligible IRF3 activation. Cleaves host MAVS, TRIF and TANK, which are then unable to regulate pattern recognition receptor (PRR)-mediated type-I IFN production. Inhibits the integrated stress response (ISR) in the infected cell by disrupting eIF4GI-G3BP1 interaction. Stress granule formation is thus inhibited. Functionally, replicates the genomic and antigenomic RNAs by recognizing replications specific signals. Performs VPg uridylylation. This chain is Genome polyprotein, found in Sus scrofa (Pig).